Here is a 413-residue protein sequence, read N- to C-terminus: Coiled-coil domain-containing protein 83 (413 aa).

Residues 1–21 (MENSGKANKKDTHDGPPKEIK) are disordered. A compositionally biased stretch (basic and acidic residues) spans 8–21 (NKKDTHDGPPKEIK). 2 coiled-coil regions span residues 37–184 (EDAV…RKKI) and 216–256 (WEND…LSNC).

This Homo sapiens (Human) protein is Coiled-coil domain-containing protein 83 (CCDC83).